The following is a 962-amino-acid chain: MEAPEYLDLDEIDFSDDISYSVTSLKTIPALCRRCDSQNEDRSVSSSGWNCGVSTLITNPQKPTGIADVYSKFRPVKRVSPLKHQPETLENNENEDQKNNTVEYQKGGETDQGPQPEELSPEDGVGGLPGKGSEPSQALGELEHYDLDMDEILDVPYIKSSQQLAPLTKVTSEKRILGLCTTINGLSAKTCPIASTENSTPNMTPFCVLSPVKSPHLRKAPTALRDQHKLSTEDSESSPALGKCGPAYESENHSKDFLNKVFSDPHSRKIEKSGPDCKLRSFHLQSSAAGAKTEEPINGMNWTNTQGTEERTEYLKKVRSILNIVNEGQISLLPHLAADNLDKIHDENGNNLLHIAASKGHAECLQHLTSLMGEDCLNERNTEQLTPAGLAIKNGQLECVRWMVSETEAIAELSCSKDFPSLIHYAGCYGQEKILLWLLQFMQEQGISLDEVDREGNSAVHVASQHGYLGCIQTLVEYGANVTMQNHAGEKPSQSAERHGHTLCSRYLVVVETCMSLASQVVKLTKQLKEQTVERVTLQSQLQQLLEAQKSEGKSLPSSPSSPSSPASTKSQWKALDTDEESTGKSKVGAQEGIQVLGSLSVSSRARTKGKDEDSDKILRQLLGKEISENVCTQEKLSLEFQDAQASSRNSKKIPLEKRELKLARLRQLMQRSLSESDTDSNNSEDPKNTPVKRADRPRPQPIVESVENVDSAESLHLMIKKHSLASGRRFPFGMKASKSLDGHSPSPTSESSEPDLDSHGPGLGMTPPTQPSTEATQSSPDSTAAQKVATSPKSALKSPSSKRRTSQNSKLRVTFEEPVVQMEQTGLELNGEKDKDKGRAPQRTSESGEQMKRPFGTFRSIMESLSGNQNNNNNYQPASQLKTCTLPLTSLGRKTADAKGNPVSPASKGKNKAAMYSSCIHLPSNALVEEHLRDYARHNDIKRNATKTYHMKHTAEPEPRE.

Disordered stretches follow at residues Ser-80–Asn-99, Tyr-104–Gln-137, and Thr-222–Glu-249. 4 ANK repeats span residues Asn-348–Glu-379, Glu-383–Glu-412, Asp-418–Ile-447, and Glu-455–Met-484. Residues Val-522–Ala-548 adopt a coiled-coil conformation. Residues Ala-548–Ala-590 are disordered. Residues Lys-554–Ser-571 are compositionally biased toward low complexity. The ANK 5 repeat unit spans residues Val-602–Val-631. The span at Arg-667–Ser-684 shows a compositional bias: low complexity. A disordered region spans residues Arg-667–Met-852. Over residues Glu-685 to Arg-699 the composition is skewed to basic and acidic residues. Residues Pro-698–Gly-728 form an ANK 6 repeat. Positions Pro-772 to Ala-790 are enriched in polar residues. Residues Asn-831–Arg-840 are compositionally biased toward basic and acidic residues.

In terms of assembly, associates with SNCA, RNF19A and PRKN. Ubiquitinated; mediated by SIAH1 or RNF19A and leading to its subsequent proteasomal degradation.

This Mus musculus (Mouse) protein is Synphilin-1 (Sncaip).